The chain runs to 438 residues: sn-glycerol-3-phosphate-binding periplasmic protein UgpB (438 aa).

The N-terminal stretch at 1–23 (MKPLHYTASALALGLALMGNAQA) is a signal peptide. Sn-glycerol 3-phosphate is bound by residues Y65, E89, S144, S270, G307, Y346, and R397.

This sequence belongs to the bacterial solute-binding protein 1 family. In terms of assembly, the complex is composed of two ATP-binding proteins (UgpC), two transmembrane proteins (UgpA and UgpE) and a solute-binding protein (UgpB).

The protein resides in the periplasm. Its function is as follows. Part of the ABC transporter complex UgpBAEC involved in sn-glycerol-3-phosphate (G3P) import. Binds G3P. The protein is sn-glycerol-3-phosphate-binding periplasmic protein UgpB (ugpB) of Shigella flexneri.